The following is a 139-amino-acid chain: Large ribosomal subunit protein uL16 (139 aa).

Positions 1–17 are enriched in basic residues; sequence MLIPRRTKHRKQHHPRR. The segment at 1–24 is disordered; the sequence is MLIPRRTKHRKQHHPRRTGAASGG.

The protein belongs to the universal ribosomal protein uL16 family. In terms of assembly, part of the 50S ribosomal subunit.

Functionally, binds 23S rRNA and is also seen to make contacts with the A and possibly P site tRNAs. The sequence is that of Large ribosomal subunit protein uL16 from Beutenbergia cavernae (strain ATCC BAA-8 / DSM 12333 / CCUG 43141 / JCM 11478 / NBRC 16432 / NCIMB 13614 / HKI 0122).